The sequence spans 132 residues: Small ribosomal subunit protein uS11 (132 aa).

It belongs to the universal ribosomal protein uS11 family. As to quaternary structure, part of the 30S ribosomal subunit. Interacts with proteins S7 and S18. Binds to IF-3.

Functionally, located on the platform of the 30S subunit, it bridges several disparate RNA helices of the 16S rRNA. Forms part of the Shine-Dalgarno cleft in the 70S ribosome. The polypeptide is Small ribosomal subunit protein uS11 (Legionella pneumophila (strain Paris)).